The chain runs to 176 residues: Ribosome maturation factor RimM (176 aa).

The PRC barrel domain maps to 97–176; the sequence is EDEFYWRDLI…QILVDWDPDF (80 aa).

It belongs to the RimM family. In terms of assembly, binds ribosomal protein uS19.

It localises to the cytoplasm. In terms of biological role, an accessory protein needed during the final step in the assembly of 30S ribosomal subunit, possibly for assembly of the head region. Essential for efficient processing of 16S rRNA. May be needed both before and after RbfA during the maturation of 16S rRNA. It has affinity for free ribosomal 30S subunits but not for 70S ribosomes. The protein is Ribosome maturation factor RimM of Shewanella loihica (strain ATCC BAA-1088 / PV-4).